An 871-amino-acid polypeptide reads, in one-letter code: DNA mismatch repair protein MutS (871 aa).

Residue 620-627 (GPNMGGKS) participates in ATP binding. Residues 806–837 (HHGGLNEPKQATMELTPPPEAIPSHTEKRNPL) form a disordered region.

This sequence belongs to the DNA mismatch repair MutS family.

In terms of biological role, this protein is involved in the repair of mismatches in DNA. It is possible that it carries out the mismatch recognition step. This protein has a weak ATPase activity. The protein is DNA mismatch repair protein MutS of Idiomarina loihiensis (strain ATCC BAA-735 / DSM 15497 / L2-TR).